The following is a 383-amino-acid chain: Methenyltetrahydrofolate synthase domain-containing protein (383 aa).

The interval 249-301 is disordered; the sequence is AGKDVTLQGEHQHLPEPGCQQTVPLSVGRRPPDTPGPETNSMEAAPGSPPGEG. The RRM domain maps to 306–379; that stretch reads ADVYVGNLPG…DTLRVALARQ (74 aa).

This chain is Methenyltetrahydrofolate synthase domain-containing protein (MTHFSD), found in Homo sapiens (Human).